Here is a 127-residue protein sequence, read N- to C-terminus: Large ribosomal subunit protein bL17 (127 aa).

Belongs to the bacterial ribosomal protein bL17 family. As to quaternary structure, part of the 50S ribosomal subunit. Contacts protein L32.

This Levilactobacillus brevis (strain ATCC 367 / BCRC 12310 / CIP 105137 / JCM 1170 / LMG 11437 / NCIMB 947 / NCTC 947) (Lactobacillus brevis) protein is Large ribosomal subunit protein bL17.